A 317-amino-acid chain; its full sequence is tRNA pseudouridine synthase B (317 aa).

Aspartate 47 acts as the Nucleophile in catalysis.

Belongs to the pseudouridine synthase TruB family. Type 1 subfamily.

It catalyses the reaction uridine(55) in tRNA = pseudouridine(55) in tRNA. In terms of biological role, responsible for synthesis of pseudouridine from uracil-55 in the psi GC loop of transfer RNAs. The protein is tRNA pseudouridine synthase B of Vibrio atlanticus (strain LGP32) (Vibrio splendidus (strain Mel32)).